Here is a 143-residue protein sequence, read N- to C-terminus: Large ribosomal subunit protein mL51 (143 aa).

The N-terminal 52 residues, methionine 1 to glutamate 52, are a transit peptide targeting the mitochondrion.

The protein belongs to the mitochondrion-specific ribosomal protein mL51 family. Component of the mitochondrial ribosome large subunit (39S) which comprises a 16S rRNA and about 50 distinct proteins.

The protein localises to the mitochondrion. The chain is Large ribosomal subunit protein mL51 (MRPL51) from Gallus gallus (Chicken).